The chain runs to 1082 residues: uncharacterized protein (1082 aa).

Positions 50-319 (TTMTGGVSLA…LDNRPIGVLF (270 aa)) constitute a PNPLA domain. Positions 120-124 (GTSAG) match the GXSXG motif. Catalysis depends on Ser122, which acts as the Nucleophile. The active-site Proton acceptor is the Asp306. A DGA/G motif is present at residues 306–308 (DGG). The next 4 helical transmembrane spans lie at 959 to 979 (IARS…AAAI), 982 to 1002 (VTVF…LVVL), 1012 to 1032 (LFAL…TPVV), and 1057 to 1077 (WWHP…IAAA).

The protein resides in the cell membrane. This is an uncharacterized protein from Mycobacterium tuberculosis (strain ATCC 25618 / H37Rv).